A 289-amino-acid chain; its full sequence is Bifunctional protein FolD (289 aa).

NADP(+) contacts are provided by residues 165 to 167 and S190; that span reads GAS.

The protein belongs to the tetrahydrofolate dehydrogenase/cyclohydrolase family. As to quaternary structure, homodimer.

The enzyme catalyses (6R)-5,10-methylene-5,6,7,8-tetrahydrofolate + NADP(+) = (6R)-5,10-methenyltetrahydrofolate + NADPH. It carries out the reaction (6R)-5,10-methenyltetrahydrofolate + H2O = (6R)-10-formyltetrahydrofolate + H(+). It participates in one-carbon metabolism; tetrahydrofolate interconversion. In terms of biological role, catalyzes the oxidation of 5,10-methylenetetrahydrofolate to 5,10-methenyltetrahydrofolate and then the hydrolysis of 5,10-methenyltetrahydrofolate to 10-formyltetrahydrofolate. The protein is Bifunctional protein FolD of Ralstonia pickettii (strain 12J).